Here is a 598-residue protein sequence, read N- to C-terminus: NADH-quinone oxidoreductase subunit C/D (598 aa).

Residues 1-189 form an NADH dehydrogenase I subunit C region; sequence MTDLTTSDSL…DPYVLTKQKE (189 aa). The interval 213–598 is NADH dehydrogenase I subunit D; that stretch reads DFMFLNLGPN…IDFVMSDVDR (386 aa).

This sequence in the N-terminal section; belongs to the complex I 30 kDa subunit family. The protein in the C-terminal section; belongs to the complex I 49 kDa subunit family. As to quaternary structure, NDH-1 is composed of 13 different subunits. Subunits NuoB, CD, E, F, and G constitute the peripheral sector of the complex.

It localises to the cell inner membrane. It catalyses the reaction a quinone + NADH + 5 H(+)(in) = a quinol + NAD(+) + 4 H(+)(out). In terms of biological role, NDH-1 shuttles electrons from NADH, via FMN and iron-sulfur (Fe-S) centers, to quinones in the respiratory chain. The immediate electron acceptor for the enzyme in this species is believed to be ubiquinone. Couples the redox reaction to proton translocation (for every two electrons transferred, four hydrogen ions are translocated across the cytoplasmic membrane), and thus conserves the redox energy in a proton gradient. This Yersinia pestis bv. Antiqua (strain Angola) protein is NADH-quinone oxidoreductase subunit C/D.